Consider the following 867-residue polypeptide: Prominin-1 (867 aa).

An N-terminal signal peptide occupies residues 1-19 (MALVFSALLLLGLCGKISS). Residues 20-107 (EGQPAFHNTP…VLALKIALYE (88 aa)) are Extracellular-facing. Residues 108 to 128 (IGVLICAILGLLFIILMPLVG) form a helical membrane-spanning segment. Residues 129-158 (CFFCMCRCCNKCGGEMHQRQKQNAPCRRKC) lie on the Cytoplasmic side of the membrane. A helical transmembrane segment spans residues 159 to 179 (LGLSLLVICLLMSLGIIYGFV). At 180–434 (ANQQTRTRIK…LPKLEEYDSY (255 aa)) the chain is on the extracellular side. Lysine 226, lysine 258, and lysine 265 each carry N6-acetyllysine. N-linked (GlcNAc...) asparagine glycans are attached at residues asparagine 273, asparagine 291, asparagine 332, asparagine 374, and asparagine 415. Residues 435-455 (WWLGGLIVCFLLTLIVTFFFL) form a helical membrane-spanning segment. The Cytoplasmic segment spans residues 456-487 (GLLCGVFGYDKHATPTRRGCVSNTGGIFLMAG). Residues 488–508 (VGFGFLFCWILMILVVLTFVV) form a helical membrane-spanning segment. Residues 509 to 794 (GANVEKLLCE…LCGYVADPLN (286 aa)) lie on the Extracellular side of the membrane. N-linked (GlcNAc...) asparagine glycosylation is found at asparagine 554, asparagine 581, and asparagine 732. The chain crosses the membrane as a helical span at residues 795-815 (LFWFGIGKATVLLLPAVIIAI). At 816–867 (KLAKYYRRMDSEDVYDDVETVPMKNLEIGSNGYHKDHLYGVHNPVMTSPSRY) the chain is on the cytoplasmic side. Serine 865 bears the Phosphoserine mark.

This sequence belongs to the prominin family. As to quaternary structure, interacts with CDHR1 and with actin filaments. Interacts with NAT8 and NAT8B. Acetylation at Lys-226, Lys-258 and Lys-265 by NAT8 and NAT8B may control PROM1 protein expression and its function in cell apoptosis. In the submandibular gland, expressed on the apical side of epithelial cells. In the parotid gland, expressed in the intercalated ducts. In the sublingual gland, expressed in intercalated ducts. In the extraorbital lacrimal gland, expressed in the intercalated tubules and larger intralobular ducts. Expressed in the retina. Present in urine within small membrane particles (at protein level). In the embryo, expressed on the apical side of neuroepithelial cells and of other epithelia such as lung buds, gut and ureter buds. In the adult, expressed at the apical side of the kidney tubules and of the ependymal layer of the brain. Not expressed in gut, liver, lung, pituitary, adrenal, heart or spleen. Localized to the nascent disk membranes at the base of the rod outer segment in the retina (at protein level).

The protein resides in the apical cell membrane. It localises to the cell projection. The protein localises to the microvillus membrane. It is found in the cilium. Its subcellular location is the photoreceptor outer segment. The protein resides in the endoplasmic reticulum. It localises to the endoplasmic reticulum-Golgi intermediate compartment. Its function is as follows. May play a role in cell differentiation, proliferation and apoptosis. Binds cholesterol in cholesterol-containing plasma membrane microdomains and may play a role in the organization of the apical plasma membrane in epithelial cells. During early retinal development acts as a key regulator of disk morphogenesis. Involved in regulation of MAPK and Akt signaling pathways. In neuroblastoma cells suppresses cell differentiation such as neurite outgrowth in a RET-dependent manner. The polypeptide is Prominin-1 (Prom1) (Mus musculus (Mouse)).